Here is a 712-residue protein sequence, read N- to C-terminus: Osmolarity two-component system protein SSK1 (712 aa).

The segment at 73-114 (ADNTSSNNTNDNSCRSKSNGAGSGANLSVNSNTKSSVSPTAG) is disordered. A compositionally biased stretch (low complexity) spans 74–85 (DNTSSNNTNDNS). Residues 87–113 (RSKSNGAGSGANLSVNSNTKSSVSPTA) show a composition bias toward polar residues. 6 positions are modified to phosphoserine: S110, S195, S327, S351, S368, and S380. The segment at 340 to 362 (KADLKGKDGNSSPQEFKLITDEE) is disordered. Positions 448 to 468 (EVQRRKEDVTPASPILTSSQT) are disordered. One can recognise a Response regulatory domain in the interval 505-647 (NVLIVEDNVI…WLSKKITEWG (143 aa)). A 4-aspartylphosphate modification is found at D554. Positions 672–712 (KSPQKPIAPSNPHSFKQATSMTPTHSPVRKNSNLSPTQIEL) are disordered. S673 carries the phosphoserine modification. The segment covering 682-712 (NPHSFKQATSMTPTHSPVRKNSNLSPTQIEL) has biased composition (polar residues). Phosphothreonine is present on T693. Phosphoserine occurs at positions 703 and 706.

The protein belongs to the SSK1 family. As to quaternary structure, interacts with SSK2, SSK22 and YPD1. In terms of processing, the phosphorelay mechanism involves the sequential transfer of a phosphate group from 'His-576' (H1) to 'Asp-1144' (D1) of SLN1, then to 'His-64' (H2) of YPD1 and finally to Asp-554 (D2) of SSK1.

The protein localises to the cytoplasm. Its function is as follows. Final receptor of the SLN1-YPD1-SSK1 two-component regulatory system, which controls activity of the HOG1 pathway in response to changes in the osmolarity of the extracellular environment. Under normal osmotic conditions, maintained in a phosphorylated and inactive state by the phosphorelay intermediate protein YPD1. Under conditions of high osmolarity, the histidine kinase SLN1 is no longer active and the unphosphorylated form of SSK1 interacts with and activates SSK2 and SSK22, two MAPKKKs that further stimulate the PBS2-HOG1 MAPKK-MAPK cascade. Unphosphorylated SSK1 is subsequently degraded by the UBC7-dependent ubiquitin-proteasome system to down-regulate the HOG1 pathway after completion of the osmotic adaptation. The sequence is that of Osmolarity two-component system protein SSK1 from Saccharomyces cerevisiae (strain ATCC 204508 / S288c) (Baker's yeast).